Here is a 398-residue protein sequence, read N- to C-terminus: 8-amino-7-oxononanoate synthase (398 aa).

Substrate is bound by residues arginine 22 and arginine 29. 109–110 (GW) contributes to the pyridoxal 5'-phosphate binding site. Histidine 141 contributes to the substrate binding site. Residues serine 189, 214–217 (DEAH), and 242–245 (TFSK) contribute to the pyridoxal 5'-phosphate site. At lysine 245 the chain carries N6-(pyridoxal phosphate)lysine. Threonine 359 is a binding site for substrate.

Belongs to the class-II pyridoxal-phosphate-dependent aminotransferase family. BioF subfamily. Homodimer. Requires pyridoxal 5'-phosphate as cofactor.

It carries out the reaction 6-carboxyhexanoyl-[ACP] + L-alanine + H(+) = (8S)-8-amino-7-oxononanoate + holo-[ACP] + CO2. It functions in the pathway cofactor biosynthesis; biotin biosynthesis. Its function is as follows. Catalyzes the decarboxylative condensation of pimeloyl-[acyl-carrier protein] and L-alanine to produce 8-amino-7-oxononanoate (AON), [acyl-carrier protein], and carbon dioxide. This is 8-amino-7-oxononanoate synthase from Gluconacetobacter diazotrophicus (strain ATCC 49037 / DSM 5601 / CCUG 37298 / CIP 103539 / LMG 7603 / PAl5).